The chain runs to 276 residues: SKA complex subunit 1 homolog (276 aa).

Residues 48-78 (VDVSLTAMEAQLQAVRRRLQEEREAFPKAKK) are a coiled coil.

Belongs to the SKA1 family.

This is SKA complex subunit 1 homolog from Oryza sativa subsp. indica (Rice).